Reading from the N-terminus, the 459-residue chain is Cysteine--tRNA ligase (459 aa).

Cys-27 provides a ligand contact to Zn(2+). The short motif at 29 to 39 is the 'HIGH' region element; sequence PTVYDDAHLGH. Cys-202, His-231, and Glu-235 together coordinate Zn(2+). Residues 263–267 carry the 'KMSKS' region motif; that stretch reads KMSKS. Lys-266 contributes to the ATP binding site.

It belongs to the class-I aminoacyl-tRNA synthetase family. Monomer. Requires Zn(2+) as cofactor.

The protein resides in the cytoplasm. It catalyses the reaction tRNA(Cys) + L-cysteine + ATP = L-cysteinyl-tRNA(Cys) + AMP + diphosphate. The sequence is that of Cysteine--tRNA ligase from Campylobacter fetus subsp. fetus (strain 82-40).